The chain runs to 231 residues: MAKLTKKQKALASKVVAQKLYPLQEALTLAKETAIAKFDESIDVAVNLGVDARKSDQVVRGSVVLPAGTGKSVRVAVFAQGEKAEAAKAAGAEVVGFDDLAAEVKAGNLNFDVVIATPDAMKVVGQLGQILGPRGLMPNPKVGTVTMDVVTAVKNAKAGQVQYRTDKAGIIHATIGRASFSVESLESNLKALIDALAKAKPASSKGQYLKKIAVSATMGPGVRVDQSTVVA.

Belongs to the universal ribosomal protein uL1 family. Part of the 50S ribosomal subunit.

Binds directly to 23S rRNA. The L1 stalk is quite mobile in the ribosome, and is involved in E site tRNA release. Its function is as follows. Protein L1 is also a translational repressor protein, it controls the translation of the L11 operon by binding to its mRNA. This chain is Large ribosomal subunit protein uL1, found in Dechloromonas aromatica (strain RCB).